Reading from the N-terminus, the 454-residue chain is UPF0210 protein Cphy_2797 (454 aa).

The protein belongs to the UPF0210 family. Homodimer.

This Lachnoclostridium phytofermentans (strain ATCC 700394 / DSM 18823 / ISDg) (Clostridium phytofermentans) protein is UPF0210 protein Cphy_2797.